A 179-amino-acid polypeptide reads, in one-letter code: MAEERSQRNRDRSREEKIDDGMIEKLVAVNRVSKTVKGGRQFTFTALTIVGNGEGSVGFGYGKAREVPVAIQKSMEYARKTMANVSLNNGTLWHPVKANHGAACVFMKPASEGTGVIAGGAMRAVLEAVGVKDVLAKAIGSRNPINLVRATLKGLEDMQSPTHIALKRGKNVRGFSHGS.

One can recognise an S5 DRBM domain in the interval 22–85 (MIEKLVAVNR…EYARKTMANV (64 aa)).

This sequence belongs to the universal ribosomal protein uS5 family. As to quaternary structure, part of the 30S ribosomal subunit. Contacts proteins S4 and S8.

Its function is as follows. With S4 and S12 plays an important role in translational accuracy. Located at the back of the 30S subunit body where it stabilizes the conformation of the head with respect to the body. This chain is Small ribosomal subunit protein uS5, found in Xylella fastidiosa (strain 9a5c).